The chain runs to 290 residues: Glycine--tRNA ligase alpha subunit (290 aa).

This sequence belongs to the class-II aminoacyl-tRNA synthetase family. As to quaternary structure, tetramer of two alpha and two beta subunits.

It is found in the cytoplasm. It catalyses the reaction tRNA(Gly) + glycine + ATP = glycyl-tRNA(Gly) + AMP + diphosphate. The sequence is that of Glycine--tRNA ligase alpha subunit from Desulfotalea psychrophila (strain LSv54 / DSM 12343).